We begin with the raw amino-acid sequence, 600 residues long: Mediator of RNA polymerase II transcription subunit 26 (600 aa).

Residues 10-87 (QIRDRLLQAI…RSWQKLIEPA (78 aa)) form the TFIIS N-terminal domain. Disordered regions lie at residues 99–330 (GATG…RRLE), 348–402 (HQRL…PRDY), and 431–461 (TRQI…ELDK). The span at 123–133 (SIHDLKSRNDL) shows a compositional bias: basic and acidic residues. Residues 175-197 (PNSSPLPTNGISGSPESFASSLD) show a composition bias toward polar residues. Basic and acidic residues predominate over residues 207-218 (SRLERDENDKHS). Over residues 314-324 (SPLPLAQPSTP) the composition is skewed to pro residues. The span at 441-461 (EPVRADSPVHMEQQSRTELDK) shows a compositional bias: basic and acidic residues. 3 positions are modified to phosphoserine: Ser-447, Ser-470, and Ser-535.

The protein belongs to the Mediator complex subunit 26 family. As to quaternary structure, component of the Mediator complex, which is composed of MED1, MED4, MED6, MED7, MED8, MED9, MED10, MED11, MED12, MED13, MED13L, MED14, MED15, MED16, MED17, MED18, MED19, MED20, MED21, MED22, MED23, MED24, MED25, MED26, MED27, MED29, MED30, MED31, CCNC, CDK8 and CDC2L6/CDK11. The MED12, MED13, CCNC and CDK8 subunits form a distinct module termed the CDK8 module. Mediator containing the CDK8 module is less active than Mediator lacking this module in supporting transcriptional activation. Individual preparations of the Mediator complex lacking one or more distinct subunits have been variously termed ARC, CRSP, DRIP, PC2, SMCC and TRAP. Interacts with CEBPB (when not methylated).

It localises to the nucleus. Component of the Mediator complex, a coactivator involved in the regulated transcription of nearly all RNA polymerase II-dependent genes. Mediator functions as a bridge to convey information from gene-specific regulatory proteins to the basal RNA polymerase II transcription machinery. Mediator is recruited to promoters by direct interactions with regulatory proteins and serves as a scaffold for the assembly of a functional pre-initiation complex with RNA polymerase II and the general transcription factors. This chain is Mediator of RNA polymerase II transcription subunit 26 (MED26), found in Homo sapiens (Human).